A 324-amino-acid chain; its full sequence is Anthranilate phosphoribosyltransferase (324 aa).

5-phospho-alpha-D-ribose 1-diphosphate contacts are provided by residues G75, 78–79, T83, 85–88, 102–110, and S114; these read GD, NVST, and KHGNFGITG. An anthranilate-binding site is contributed by G75. S87 contributes to the Mg(2+) binding site. N105 lines the anthranilate pocket. R160 is an anthranilate binding site. Mg(2+)-binding residues include D216 and E217.

The protein belongs to the anthranilate phosphoribosyltransferase family. As to quaternary structure, homodimer. It depends on Mg(2+) as a cofactor.

It carries out the reaction N-(5-phospho-beta-D-ribosyl)anthranilate + diphosphate = 5-phospho-alpha-D-ribose 1-diphosphate + anthranilate. Its pathway is amino-acid biosynthesis; L-tryptophan biosynthesis; L-tryptophan from chorismate: step 2/5. Its function is as follows. Catalyzes the transfer of the phosphoribosyl group of 5-phosphorylribose-1-pyrophosphate (PRPP) to anthranilate to yield N-(5'-phosphoribosyl)-anthranilate (PRA). The polypeptide is Anthranilate phosphoribosyltransferase (Picrophilus torridus (strain ATCC 700027 / DSM 9790 / JCM 10055 / NBRC 100828 / KAW 2/3)).